A 249-amino-acid chain; its full sequence is Anamorsin homolog (249 aa).

The interval 1–130 (MEQFKDLQKS…ETGSAARLSF (130 aa)) is N-terminal SAM-like domain. Residues 131–161 (AKKAAGVNVWKISGDDEELIDEEDLLDEADK) form a linker region. [2Fe-2S] cluster-binding residues include Cys-172, Cys-181, Cys-184, and Cys-186. Residues 172–186 (CSTTGKRKACKNCSC) form a fe-S binding site A region. The [4Fe-4S] cluster site is built by Cys-210, Cys-213, Cys-221, and Cys-224. 2 short sequence motifs (cx2C motif) span residues 210–213 (CGNC) and 221–224 (CSTC). The interval 210-224 (CGNCYLGDAFRCSTC) is fe-S binding site B.

Belongs to the anamorsin family. Monomer. [2Fe-2S] cluster is required as a cofactor. It depends on [4Fe-4S] cluster as a cofactor.

It localises to the cytoplasm. The protein localises to the mitochondrion intermembrane space. In terms of biological role, component of the cytosolic iron-sulfur (Fe-S) protein assembly (CIA) machinery. Required for the maturation of extramitochondrial Fe-S proteins. Part of an electron transfer chain functioning in an early step of cytosolic Fe-S biogenesis, facilitating the de novo assembly of a [4Fe-4S] cluster on the cytosolic Fe-S scaffold complex. Electrons are transferred from NADPH via a FAD- and FMN-containing diflavin oxidoreductase. Together with the diflavin oxidoreductase, also required for the assembly of the diferric tyrosyl radical cofactor of ribonucleotide reductase (RNR), probably by providing electrons for reduction during radical cofactor maturation in the catalytic small subunit. The chain is Anamorsin homolog from Drosophila grimshawi (Hawaiian fruit fly).